A 243-amino-acid chain; its full sequence is Nuclear ubiquitous casein and cyclin-dependent kinase substrate 1 (243 aa).

A disordered region spans residues 1–243 (MSRPVRNRKV…SEDEAASGED (243 aa)). Tyrosine 13 is subject to Phosphotyrosine. Phosphoserine is present on residues serine 14 and serine 19. Tyrosine 26 carries the post-translational modification Phosphotyrosine. Positions 35–51 (KKIRSSPREAKNKRRSG) are enriched in basic residues. Phosphoserine occurs at positions 54, 58, 61, 73, 75, and 79. A compositionally biased stretch (basic and acidic residues) spans 64–77 (KDVKTKKDDSHSAE). A compositionally biased stretch (low complexity) spans 91 to 100 (QQRQAASKAA). Acidic residues predominate over residues 111-124 (VGSEEEPEEDDEAP). Phosphoserine is present on residues serine 113, serine 130, serine 132, and serine 144. Positions 132-145 (SDEDFLMEDDDDSD) are enriched in acidic residues. The segment covering 149 to 174 (SKKKNKKMVKKSKPERKEKKMPKPRL) has biased composition (basic residues). Threonine 179 is subject to Phosphothreonine. Position 181 is a phosphoserine (serine 181). Residues 197–206 (TSKEKTPSPK) show a composition bias toward basic and acidic residues. Threonine 202 carries the post-translational modification Phosphothreonine. Residues serine 204, serine 214, serine 223, serine 229, serine 234, and serine 240 each carry the phosphoserine modification. Over residues 232–243 (EGSEDEAASGED) the composition is skewed to acidic residues.

Does not interact with RAD51. In terms of processing, phosphorylated in an ATM-dependent manner in response to DNA damage. Phosphorylated by CDK1 and casein kinase.

The protein resides in the nucleus. Its subcellular location is the chromosome. In terms of biological role, chromatin-associated protein involved in DNA repair by promoting homologous recombination (HR). Binds double-stranded DNA (dsDNA) and secondary DNA structures, such as D-loop structures, but with less affinity than RAD51AP1. This chain is Nuclear ubiquitous casein and cyclin-dependent kinase substrate 1, found in Rattus norvegicus (Rat).